The sequence spans 77 residues: Defensin-like protein (77 aa).

The first 30 residues, Met1–Ala30, serve as a signal peptide directing secretion. Disulfide bonds link Cys33/Cys77, Cys44/Cys64, Cys50/Cys71, and Cys54/Cys73.

The protein belongs to the DEFL family.

It is found in the secreted. This is Defensin-like protein from Nelumbo nucifera (Sacred lotus).